The primary structure comprises 626 residues: Chaperone protein HtpG (626 aa).

Positions 1-341 (MAKKEFKAES…SEDLSLNISR (341 aa)) are a; substrate-binding. A b region spans residues 342-552 (EMLQHDRQLK…DGEVTIEMEK (211 aa)). Residues 553-626 (ILNAMPDSQN…FTNNICKVMV (74 aa)) are c.

The protein belongs to the heat shock protein 90 family. In terms of assembly, homodimer.

It localises to the cytoplasm. Its function is as follows. Molecular chaperone. Has ATPase activity. The polypeptide is Chaperone protein HtpG (Bacillus subtilis (strain 168)).